Consider the following 239-residue polypeptide: Ribonuclease PH (239 aa).

Residues arginine 88 and 126–128 (GTR) each bind phosphate.

Belongs to the RNase PH family. In terms of assembly, homohexameric ring arranged as a trimer of dimers.

The catalysed reaction is tRNA(n+1) + phosphate = tRNA(n) + a ribonucleoside 5'-diphosphate. Its function is as follows. Phosphorolytic 3'-5' exoribonuclease that plays an important role in tRNA 3'-end maturation. Removes nucleotide residues following the 3'-CCA terminus of tRNAs; can also add nucleotides to the ends of RNA molecules by using nucleoside diphosphates as substrates, but this may not be physiologically important. Probably plays a role in initiation of 16S rRNA degradation (leading to ribosome degradation) during starvation. This chain is Ribonuclease PH, found in Coxiella burnetii (strain Dugway 5J108-111).